The chain runs to 76 residues: MAYIYALIFAIVVCMNTDVIQAEESQHDTLENVEYRLSCIPKGGECERMADPCCPGLQCLGGNPFNKENFGKCKCQ.

An N-terminal signal peptide occupies residues 1 to 22; that stretch reads MAYIYALIFAIVVCMNTDVIQA.

The protein belongs to the scoloptoxin-13 family. In terms of processing, contains 3 disulfide bonds. In terms of tissue distribution, expressed by the venom gland.

The protein localises to the secreted. Its function is as follows. Inhibits voltage-gated calcium channel (Cav) currents. This Scolopendra mutilans (Chinese red-headed centipede) protein is Omega-scoloptoxin(13)-Ssm2b.